Reading from the N-terminus, the 102-residue chain is NADH-quinone oxidoreductase subunit K (102 aa).

Transmembrane regions (helical) follow at residues 6–26 (FEHA…ALLI), 30–50 (LIVM…AFIA), and 62–82 (VMFL…LGLG).

Belongs to the complex I subunit 4L family. As to quaternary structure, NDH-1 is composed of 14 different subunits. Subunits NuoA, H, J, K, L, M, N constitute the membrane sector of the complex.

It localises to the cell inner membrane. The catalysed reaction is a quinone + NADH + 5 H(+)(in) = a quinol + NAD(+) + 4 H(+)(out). Functionally, NDH-1 shuttles electrons from NADH, via FMN and iron-sulfur (Fe-S) centers, to quinones in the respiratory chain. The immediate electron acceptor for the enzyme in this species is believed to be ubiquinone. Couples the redox reaction to proton translocation (for every two electrons transferred, four hydrogen ions are translocated across the cytoplasmic membrane), and thus conserves the redox energy in a proton gradient. The polypeptide is NADH-quinone oxidoreductase subunit K (Methylococcus capsulatus (strain ATCC 33009 / NCIMB 11132 / Bath)).